Consider the following 475-residue polypeptide: Integrator complex subunit 15 (475 aa).

The disordered stretch occupies residues 402-444; it reads YPHIHPGRPSPLSPHSPHQSTLSSPHSPHTVLTAHPTHPALAP. Low complexity predominate over residues 416 to 430; that stretch reads HSPHQSTLSSPHSPH.

Belongs to the Integrator subunit 15 family. Component of the Integrator complex, composed of core subunits INTS1, INTS2, INTS3, INTS4, INTS5, INTS6, INTS7, INTS8, INTS9/RC74, INTS10, INTS11/CPSF3L, INTS12, INTS13, INTS14 and INTS15. The core complex associates with protein phosphatase 2A subunits PPP2CA and PPP2R1A, to form the Integrator-PP2A (INTAC) complex. INTS15 is part of the tail subcomplex, composed of INTS10, INTS13, INTS14 and INTS15.

It is found in the nucleus. The protein resides in the chromosome. In terms of biological role, component of the integrator complex, a multiprotein complex that terminates RNA polymerase II (Pol II) transcription in the promoter-proximal region of genes. The integrator complex provides a quality checkpoint during transcription elongation by driving premature transcription termination of transcripts that are unfavorably configured for transcriptional elongation: the complex terminates transcription by (1) catalyzing dephosphorylation of the C-terminal domain (CTD) of Pol II subunit POLR2A/RPB1 and SUPT5H/SPT5, (2) degrading the exiting nascent RNA transcript via endonuclease activity and (3) promoting the release of Pol II from bound DNA. The integrator complex is also involved in terminating the synthesis of non-coding Pol II transcripts, such as enhancer RNAs (eRNAs), small nuclear RNAs (snRNAs), telomerase RNAs and long non-coding RNAs (lncRNAs). INTS15 is part of the integrator tail module that acts as a platform for the recruitment of transcription factors at promoters. Within the integrator complex, INTS15 is required to bridge different integrator modules. The chain is Integrator complex subunit 15 (ints15) from Danio rerio (Zebrafish).